The following is a 119-amino-acid chain: uncharacterized protein (119 aa).

The first 18 residues, Met1–Gly18, serve as a signal peptide directing secretion. The interval Pro23 to Ala100 is disordered. Residues Gly43–Gln71 show a composition bias toward polar residues. N-linked (GlcNAc...) asparagine glycosylation occurs at Asn44.

The protein localises to the secreted. This is an uncharacterized protein from Homo sapiens (Human).